We begin with the raw amino-acid sequence, 270 residues long: Abhydrolase domain-containing protein C22H12.03 (270 aa).

The AB hydrolase-1 domain maps to 21 to 257 (PPVLIFHGLL…CGHWVHFEKP (237 aa)). Catalysis depends on charge relay system residues Ser-95, Glu-190, and His-250.

It belongs to the AB hydrolase superfamily.

It localises to the mitochondrion. In Schizosaccharomyces pombe (strain 972 / ATCC 24843) (Fission yeast), this protein is Abhydrolase domain-containing protein C22H12.03.